Reading from the N-terminus, the 208-residue chain is Ribosomal RNA small subunit methyltransferase G (208 aa).

S-adenosyl-L-methionine-binding positions include G75, L80, 126–127 (VE), and R141.

Belongs to the methyltransferase superfamily. RNA methyltransferase RsmG family.

The protein localises to the cytoplasm. It catalyses the reaction guanosine(527) in 16S rRNA + S-adenosyl-L-methionine = N(7)-methylguanosine(527) in 16S rRNA + S-adenosyl-L-homocysteine. In terms of biological role, specifically methylates the N7 position of guanine in position 527 of 16S rRNA. In Marinomonas sp. (strain MWYL1), this protein is Ribosomal RNA small subunit methyltransferase G.